A 362-amino-acid chain; its full sequence is Prostaglandin F2-alpha receptor (362 aa).

Residues 1 to 31 lie on the Extracellular side of the membrane; it reads MSTNSSIQPVSPESELLSNTTCQLEEDLSIS. 2 N-linked (GlcNAc...) asparagine glycosylation sites follow: Asn-4 and Asn-19. The chain crosses the membrane as a helical span at residues 32–54; the sequence is FSIIFMTVGILSNSLAIAILMKA. Over 55–69 the chain is Cytoplasmic; sequence YQRFRQKYKSSFLLL. The chain crosses the membrane as a helical span at residues 70–90; it reads ASALVITDFFGHLINGTIAVF. The Extracellular portion of the chain corresponds to 91-109; it reads VYASDKDWIYFDKSNILCS. Cys-108 and Cys-186 form a disulfide bridge. The chain crosses the membrane as a helical span at residues 110 to 131; that stretch reads IFGICMVFSGLCPLFLGSLMAI. Topologically, residues 132–152 are cytoplasmic; the sequence is ERCIGVTKPIFHSTKITTKHV. A helical transmembrane segment spans residues 153 to 175; that stretch reads KMMLSGVCFFAVFVALLPILGHR. The Extracellular segment spans residues 176–198; it reads DYKIQASRTWCFYKTDEIKDWED. The chain crosses the membrane as a helical span at residues 199–224; sequence RFYLLLFAFLGLLALGISFVCNAITG. Topologically, residues 225–250 are cytoplasmic; it reads ISLLKVKFRSQQHRQGRSHHFEMVIQ. The chain crosses the membrane as a helical span at residues 251–267; the sequence is LLGIMCVSCICWSPFLV. Residues 268–285 lie on the Extracellular side of the membrane; that stretch reads TMASIGMNIQDFKDSCER. A helical transmembrane segment spans residues 286–307; it reads TLFTLRMATWNQILDPWVYILL. The Cytoplasmic segment spans residues 308-362; it reads RKAVLRNLYVCTRRCCGVHVISLHVWELSSIKDSLKVAAISDLPVTEKVTQQTST.

Belongs to the G-protein coupled receptor 1 family.

It localises to the cell membrane. Receptor for prostaglandin F2-alpha (PGF2-alpha). The activity of this receptor is mediated by G proteins which activate a phosphatidylinositol-calcium second messenger system. Initiates luteolysis in the corpus luteum. The chain is Prostaglandin F2-alpha receptor (PTGFR) from Bos taurus (Bovine).